The following is a 710-amino-acid chain: Polyribonucleotide nucleotidyltransferase (710 aa).

Residues Asp-487 and Asp-493 each coordinate Mg(2+). One can recognise a KH domain in the interval 554 to 613 (PRIEVMNIPVDKIREVIGSGGKVIREIVEKTGAKINIEDDGTVKIASSSGKEIEAARKWI). An S1 motif domain is found at 623 to 691 (GQIYEGTVVK…ERGKVRLSMK (69 aa)).

It belongs to the polyribonucleotide nucleotidyltransferase family. Mg(2+) serves as cofactor.

It localises to the cytoplasm. It carries out the reaction RNA(n+1) + phosphate = RNA(n) + a ribonucleoside 5'-diphosphate. In terms of biological role, involved in mRNA degradation. Catalyzes the phosphorolysis of single-stranded polyribonucleotides processively in the 3'- to 5'-direction. In Rhizobium rhizogenes (strain K84 / ATCC BAA-868) (Agrobacterium radiobacter), this protein is Polyribonucleotide nucleotidyltransferase.